The primary structure comprises 207 residues: LexA repressor (207 aa).

Positions 28-48 (RAEISRELGFKSANAAEEHLK) form a DNA-binding region, H-T-H motif. Catalysis depends on for autocatalytic cleavage activity residues serine 123 and lysine 160.

Belongs to the peptidase S24 family. In terms of assembly, homodimer.

It catalyses the reaction Hydrolysis of Ala-|-Gly bond in repressor LexA.. Represses a number of genes involved in the response to DNA damage (SOS response), including recA and lexA. In the presence of single-stranded DNA, RecA interacts with LexA causing an autocatalytic cleavage which disrupts the DNA-binding part of LexA, leading to derepression of the SOS regulon and eventually DNA repair. In Haemophilus influenzae (strain 86-028NP), this protein is LexA repressor.